The chain runs to 87 residues: Small ribosomal subunit protein bS20 (87 aa).

Residues 67–87 (HKNNGSRKASRLDAYVQSKQQ) form a disordered region.

Belongs to the bacterial ribosomal protein bS20 family.

Its function is as follows. Binds directly to 16S ribosomal RNA. This chain is Small ribosomal subunit protein bS20, found in Metamycoplasma arthritidis (strain 158L3-1) (Mycoplasma arthritidis).